The following is a 62-amino-acid chain: UPF0434 protein Rleg2_3773 (62 aa).

The protein belongs to the UPF0434 family.

This is UPF0434 protein Rleg2_3773 from Rhizobium leguminosarum bv. trifolii (strain WSM2304).